Reading from the N-terminus, the 276-residue chain is Rhomboid protease GlpG (276 aa).

6 helical membrane passes run 94–114, 142–162, 169–189, 192–212, 229–249, and 250–270; these read GPVT…MSLI, IFMH…WYLG, LGSG…GYVQ, FSGP…GYVW, LIIF…GMSM, and ANGA…VDTL. Ser-201 functions as the Nucleophile in the catalytic mechanism. His-254 is an active-site residue.

The protein belongs to the peptidase S54 family.

It localises to the cell inner membrane. The catalysed reaction is Cleaves type-1 transmembrane domains using a catalytic dyad composed of serine and histidine that are contributed by different transmembrane domains.. Its function is as follows. Rhomboid-type serine protease that catalyzes intramembrane proteolysis. In Salmonella choleraesuis (strain SC-B67), this protein is Rhomboid protease GlpG.